The chain runs to 84 residues: Small ribosomal subunit protein bS18 (84 aa).

Belongs to the bacterial ribosomal protein bS18 family. Part of the 30S ribosomal subunit. Forms a tight heterodimer with protein bS6.

Binds as a heterodimer with protein bS6 to the central domain of the 16S rRNA, where it helps stabilize the platform of the 30S subunit. The protein is Small ribosomal subunit protein bS18 of Clostridium kluyveri (strain NBRC 12016).